Here is a 209-residue protein sequence, read N- to C-terminus: Ribonuclease HII (209 aa).

One can recognise an RNase H type-2 domain in the interval G18 to R209. Residues D24, E25, and D116 each coordinate a divalent metal cation.

This sequence belongs to the RNase HII family. Mn(2+) is required as a cofactor. Requires Mg(2+) as cofactor.

The protein resides in the cytoplasm. It carries out the reaction Endonucleolytic cleavage to 5'-phosphomonoester.. Endonuclease that specifically degrades the RNA of RNA-DNA hybrids. This is Ribonuclease HII from Shewanella sp. (strain MR-7).